The following is a 165-amino-acid chain: Xanthine-guanine phosphoribosyltransferase (165 aa).

5-phospho-alpha-D-ribose 1-diphosphate contacts are provided by residues 41 to 42 (RG) and 98 to 106 (DDLTDTGKT). Aspartate 99 lines the Mg(2+) pocket. Guanine is bound by residues aspartate 102 and isoleucine 145. The xanthine site is built by aspartate 102 and isoleucine 145. GMP is bound by residues 102–106 (DTGKT) and 144–145 (WI).

This sequence belongs to the purine/pyrimidine phosphoribosyltransferase family. XGPT subfamily. In terms of assembly, homotetramer. The cofactor is Mg(2+).

It is found in the cell inner membrane. It carries out the reaction GMP + diphosphate = guanine + 5-phospho-alpha-D-ribose 1-diphosphate. The enzyme catalyses XMP + diphosphate = xanthine + 5-phospho-alpha-D-ribose 1-diphosphate. It catalyses the reaction IMP + diphosphate = hypoxanthine + 5-phospho-alpha-D-ribose 1-diphosphate. The protein operates within purine metabolism; GMP biosynthesis via salvage pathway; GMP from guanine: step 1/1. It functions in the pathway purine metabolism; XMP biosynthesis via salvage pathway; XMP from xanthine: step 1/1. Its function is as follows. Purine salvage pathway enzyme that catalyzes the transfer of the ribosyl-5-phosphate group from 5-phospho-alpha-D-ribose 1-diphosphate (PRPP) to the N9 position of the 6-oxopurines guanine and xanthine to form the corresponding ribonucleotides GMP (guanosine 5'-monophosphate) and XMP (xanthosine 5'-monophosphate), with the release of PPi. To a lesser extent, also acts on hypoxanthine. This chain is Xanthine-guanine phosphoribosyltransferase, found in Brucella anthropi (strain ATCC 49188 / DSM 6882 / CCUG 24695 / JCM 21032 / LMG 3331 / NBRC 15819 / NCTC 12168 / Alc 37) (Ochrobactrum anthropi).